A 533-amino-acid chain; its full sequence is Lysophosphatidylcholine acyltransferase (533 aa).

The Cytoplasmic portion of the chain corresponds to 1–79; that stretch reads MTTSTIKPTG…VLTVLLLPIR (79 aa). The helical; Signal-anchor for type II membrane protein transmembrane segment at 80–100 threads the bilayer; the sequence is VVGCVLSLISAWMFACIGLYG. The Lumenal portion of the chain corresponds to 101-533; it reads MTLDDLKAKP…PKAVVTTAEN (433 aa). The short motif at 158 to 163 is the HXXXXD motif element; it reads HSSYVD. 3 EF-hand domains span residues 402-437, 439-474, and 475-510; these read LKNT…CKLK, SDLL…AGGK, and LNEQ…QKSS.

The protein belongs to the 1-acyl-sn-glycerol-3-phosphate acyltransferase family.

Its subcellular location is the endoplasmic reticulum membrane. The protein localises to the golgi apparatus membrane. The protein resides in the lipid droplet. The enzyme catalyses a 1-acyl-sn-glycero-3-phosphocholine + an acyl-CoA = a 1,2-diacyl-sn-glycero-3-phosphocholine + CoA. The protein operates within lipid metabolism; phospholipid metabolism. Its function is as follows. Acetyltransferase which mediates the conversion of 1-acyl-sn-glycero-3-phosphocholine (LPC) into phosphatidylcholine (PC). Has a calcium-independent activity. Displays a clear preference for saturated fatty acyl-CoAs, and 1-myristoyl or 1-palmitoyl LPC as acyl donors and acceptors, respectively. Involved in the regulation of lipid droplet number and size. This Drosophila melanogaster (Fruit fly) protein is Lysophosphatidylcholine acyltransferase.